We begin with the raw amino-acid sequence, 196 residues long: Cupin-domain-containing oxidoreductase srdD (196 aa).

Residues 99-165 form a cupin-like domain region; the sequence is DFGPGVESPL…GNGTLPGRVM (67 aa).

The protein belongs to the virC family.

In terms of biological role, highly reducing polyketide synthase; part of the gene cluster that mediates the biosynthesis of sordarial, a salicylic aldehyde structurally related to the phytotoxin pyriculol. The most interesting aspect of this pathway is formation of an aromatic product from the highly reducing polyketide synthase srdA. SrdA synthesizes a reduced polyketide chain from one molecule of acetyl-CoA and five molecules of malonyl-CoA. The polyketide chain is then reductively released as an aldehyde. The oxidoreductases srdC, srdD and srdE then oxidize one of the hydroxy groups to facilitate the intramolecular aldol condensation, followed by dehydration to yield a salicylic aldehyde. This aldehyde can undergo facile reduction by endogenous reductases to yield the alcohol 1-hydroxy-2-hydroxymethyl-3-pent-1,3-dienylbenzene. The flavin-dependent srdI counteract against the propensity of the aldehydes to be reduced under physiological conditions and is responsible for reoxidizing 1-hydroxy-2-hydroxymethyl-3-pent-1,3-dienylbenzene back to the salicylic aldehyde. This salicylic aldehyde is then selectively epoxidized by the cupin-domain-containing oxidoreductase srdB to yield the epoxide, which can be hydrolyzed stereoselectively by the hydrolase srdG to give the final product sordarial. In Neurospora crassa (strain ATCC 24698 / 74-OR23-1A / CBS 708.71 / DSM 1257 / FGSC 987), this protein is Cupin-domain-containing oxidoreductase srdD.